The chain runs to 157 residues: NADPH-dependent 7-cyano-7-deazaguanine reductase (157 aa).

The active-site Thioimide intermediate is cysteine 55. Residue aspartate 62 is the Proton donor of the active site. Substrate contacts are provided by residues 77 to 79 (VES) and 96 to 97 (HE).

The protein belongs to the GTP cyclohydrolase I family. QueF type 1 subfamily.

It is found in the cytoplasm. The enzyme catalyses 7-aminomethyl-7-carbaguanine + 2 NADP(+) = 7-cyano-7-deazaguanine + 2 NADPH + 3 H(+). It functions in the pathway tRNA modification; tRNA-queuosine biosynthesis. Its function is as follows. Catalyzes the NADPH-dependent reduction of 7-cyano-7-deazaguanine (preQ0) to 7-aminomethyl-7-deazaguanine (preQ1). This chain is NADPH-dependent 7-cyano-7-deazaguanine reductase, found in Neisseria meningitidis serogroup B (strain ATCC BAA-335 / MC58).